We begin with the raw amino-acid sequence, 423 residues long: AUGMIN subunit 4 (423 aa).

Positions 267-287 (IEEIERDEAALREDLYSADRK) form a coiled coil.

It belongs to the HAUS4 family. Part of the augmin complex composed of 8 subunits. The complex acts on microtubules and interacts with gamma-tubulin in spindles and the phragmoplast.

It is found in the cytoplasm. The protein localises to the cytoskeleton. Its subcellular location is the spindle. It localises to the phragmoplast. In terms of biological role, involved in microtubules reorganization during spindle and phragmoplast development. This is AUGMIN subunit 4 (AUG4) from Arabidopsis thaliana (Mouse-ear cress).